A 1173-amino-acid chain; its full sequence is Fas-binding factor 1 (1173 aa).

The interval 17-168 is disordered; the sequence is MALRTKKGLK…PSSSKTGLQY (152 aa). Over residues 46 to 56 the composition is skewed to basic and acidic residues; it reads KPAEPASHAKD. The segment covering 80-93 has biased composition (low complexity); sequence AGADAEASSVSDAD. Ser-172 carries the post-translational modification Phosphoserine. Disordered regions lie at residues 180–225 and 241–566; these read LAGL…GDTP and TTLG…SSRE. A compositionally biased stretch (low complexity) spans 206-216; it reads SPGAAAGQGPS. Basic and acidic residues-rich tracts occupy residues 247–258 and 287–299; these read DSPKAERKKTGD and TGER…DKKY. Polar residues-rich tracts occupy residues 331–345, 396–411, 468–477, and 533–544; these read VASS…QSVS, SPVQ…MTPS, VISQKKSQNL, and TGSSMSWSQATT. 3 coiled-coil regions span residues 617–742, 808–917, and 975–1057; these read TAQL…QQAS, QQRE…MNKC, and CELR…VQRQ. Residue Lys-1002 forms a Glycyl lysine isopeptide (Lys-Gly) (interchain with G-Cter in SUMO2) linkage. A disordered region spans residues 1091–1124; it reads ASLPGLPPRVQGPAASSRDAVQAPASSSPQCSQP. Low complexity predominate over residues 1110–1124; that stretch reads AVQAPASSSPQCSQP.

As to quaternary structure, interacts with PARD3. May interact with FAS cytoplasmic domain. Interacts with TRAPPC14. In terms of tissue distribution, broadly expressed.

It localises to the cytoplasm. The protein localises to the cytoskeleton. The protein resides in the microtubule organizing center. Its subcellular location is the centrosome. It is found in the centriole. It localises to the spindle pole. The protein localises to the cell junction. Its function is as follows. Keratin-binding protein required for epithelial cell polarization. Involved in apical junction complex (AJC) assembly via its interaction with PARD3. Required for ciliogenesis. This chain is Fas-binding factor 1 (Fbf1), found in Mus musculus (Mouse).